We begin with the raw amino-acid sequence, 146 residues long: Dihydroneopterin aldolase 1 (146 aa).

Substrate contacts are provided by residues glutamate 41, tyrosine 73, and leucine 92 to glutamate 93. The active-site Proton donor/acceptor is lysine 119.

It belongs to the DHNA family. As to quaternary structure, homooctamer. Forms a hollow cylinder assembled from two ring-shaped tetramers. Expressed in roots, leaves, stems and siliques.

It catalyses the reaction 7,8-dihydroneopterin = 6-hydroxymethyl-7,8-dihydropterin + glycolaldehyde. The protein operates within cofactor biosynthesis; tetrahydrofolate biosynthesis; 2-amino-4-hydroxy-6-hydroxymethyl-7,8-dihydropteridine diphosphate from 7,8-dihydroneopterin triphosphate: step 3/4. Catalyzes the conversion of 7,8-dihydroneopterin into 6-hydroxymethyl-7,8-dihydropterin, a biosynthetic precursor of the vitamin tetrahydrofolate. Can use L-threo-dihydroneopterin and D-erythro-dihydroneopterin as substrates for the formation of 6-hydroxymethyldihydropterin, but it can also catalyze the epimerization of carbon 2' of dihydroneopterin and dihydromonapterin. This is Dihydroneopterin aldolase 1 from Arabidopsis thaliana (Mouse-ear cress).